The sequence spans 186 residues: Peptidoglycan-recognition protein SD (186 aa).

The N-terminal stretch at 1-18 (MTWIGLLIVGLTAIAVQG) is a signal peptide. In terms of domain architecture, N-acetylmuramoyl-L-alanine amidase spans 47-169 (AVIAHTAGGA…RQVSATKSPG (123 aa)). Cysteines 57 and 63 form a disulfide. N181 is a glycosylation site (N-linked (GlcNAc...) asparagine).

Belongs to the N-acetylmuramoyl-L-alanine amidase 2 family. In terms of tissue distribution, in larvae, it is mainly expressed in fat body. Also expressed in uninduced hemocytes and mbn-2 cells.

Its subcellular location is the secreted. Peptidoglycan-recognition protein that plays a key role in innate immunity by binding to peptidoglycans (PGN) of Gram-positive bacteria and activating the Toll pathway. Has no activity against on Gram-negative bacteria and fungi. Shows some partial redundancy with PRPGP-SA in Gram-positive bacteria recognition. May act by activating the proteolytic cleavage of Spatzle and the subsequent activation of Toll pathway. Recognizes S.aureus PGN. This chain is Peptidoglycan-recognition protein SD (PGRP-SD), found in Drosophila melanogaster (Fruit fly).